The chain runs to 469 residues: Abscisic acid 8'-hydroxylase CYP707A2 (469 aa).

Residues 3 to 23 (FVSMLCLFTFISLTLLLIHSI) form a helical membrane-spanning segment. Position 414 (Cys-414) interacts with heme.

This sequence belongs to the cytochrome P450 family. Heme serves as cofactor. Expressed at low levels in fruit.

It is found in the membrane. It catalyses the reaction 2-cis-(+)-abscisate + reduced [NADPH--hemoprotein reductase] + O2 = (+)-8'-hydroxyabscisate + oxidized [NADPH--hemoprotein reductase] + H2O + H(+). The protein operates within plant hormone degradation; abscisic acid degradation. Negative regulator of fruit ripening involved in the oxidative degradation of abscisic acid (ABA). The sequence is that of Abscisic acid 8'-hydroxylase CYP707A2 from Solanum lycopersicum (Tomato).